The following is a 597-amino-acid chain: Protein kinase C-like 3 (597 aa).

In terms of domain architecture, PB1 spans 12–95; the sequence is DIKLKTRFHG…AELNIHVFVG (84 aa). Residues 127–177 form a Phorbol-ester/DAG-type zinc finger; that stretch reads GHRFQGKRLNRRIQCFICHDYIWGIGRQGFRCVDCRLCVHKKCHRHVRTHC. A disordered region spans residues 181-238; it reads PQGPNVPVAPSSGVGSLRGGRLDTSSSTTRSGGGIDNGAFHEHEIESPGSAKDMSRST. The region spanning 253 to 522 is the Protein kinase domain; sequence FRLLTVIGRG…LNDMKEHDFF (270 aa). ATP contacts are provided by residues 259–267 and Lys282; that span reads IGRGSYAKV. Asp377 (proton acceptor) is an active-site residue. The AGC-kinase C-terminal domain maps to 524–595; the sequence is GFIDWEALEQ…VNPLQMSRED (72 aa).

It belongs to the protein kinase superfamily. AGC Ser/Thr protein kinase family. PKC subfamily. In terms of assembly, interaction with par-3 required for the peripheral localization of par-6 and to form a par-3/par-6/pkc-3 complex, which is activated when cdc-42 interacts with par-6. Binds avidly to the phosphotyrosine interaction domain (PID) of a novel pkc-3 adapter protein num-1, which enables tethering and targeting of pkc-3 to the cell periphery. Requires Mg(2+) as cofactor.

The protein localises to the cytoplasm. It localises to the cytoskeleton. It carries out the reaction L-seryl-[protein] + ATP = O-phospho-L-seryl-[protein] + ADP + H(+). It catalyses the reaction L-threonyl-[protein] + ATP = O-phospho-L-threonyl-[protein] + ADP + H(+). In terms of biological role, required for the normal progression of embryogenesis and viability of the organism. Plays an indispensable role in establishing embryonic polarity and in recruiting and maintaining par-6 to the periphery, through interaction with par-3. Required for epithelial cell polarity in the distal spermatheca. Phosphorylates serine residues of num-1. Required for the expression of antimicrobial peptide nlp-29 in response in response to fungal infection or physical injury. This is Protein kinase C-like 3 from Caenorhabditis briggsae.